A 1081-amino-acid chain; its full sequence is Mediator of RNA polymerase II transcription subunit 15 (1081 aa).

N-acetylserine is present on Ser2. Residues 25-49 (LQVLMDINTLNGGSSDTADKIRIHA) are interaction with GCN4. A disordered region spans residues 238–286 (QAQAQANNNNNGLPQNGNINNNINIPQQQQMQPPNSSANNNPLQQQSSQ). Ser335 is modified (phosphoserine). Tandem repeats lie at residues 422 to 423 (QA), 424 to 425 (QA), 426 to 427 (QA), 428 to 429 (QA), 430 to 431 (QA), 432 to 433 (QA), 434 to 435 (QA), 436 to 437 (QA), 438 to 439 (QA), 440 to 441 (QA), and 442 to 443 (QA). The segment at 422-481 (QAQAQAQAQAQAQAQAQAQAQAAQAAQAQAQAQAQAQAQAQAQAQAQAQAQAQAQAQAQA) is 30 X 2 AA approximate tandem repeats of Q-A. One copy of the 12; approximate repeat lies at 444-445 (AQ). The 13; approximate repeat unit spans residues 446–447 (AA). 17 repeat units span residues 448-449 (QA), 450-451 (QA), 452-453 (QA), 454-455 (QA), 456-457 (QA), 458-459 (QA), 460-461 (QA), 462-463 (QA), 464-465 (QA), 466-467 (QA), 468-469 (QA), 470-471 (QA), 472-473 (QA), 474-475 (QA), 476-477 (QA), 478-479 (QA), and 480-481 (QA). Residues 476-497 (QAQAQAHAQHQPSQQPQQAQQQ) are compositionally biased toward low complexity. 2 disordered regions span residues 476-505 (QAQA…HGLT) and 692-712 (QQQQ…YSAM). Phosphoserine occurs at positions 736, 752, 783, 785, and 789. The tract at residues 744-836 (PVSAAATPSL…KTVQSPMGAQ (93 aa)) is disordered. A compositionally biased stretch (polar residues) spans 749 to 836 (ATPSLNKTIN…KTVQSPMGAQ (88 aa)). Thr793 is modified (phosphothreonine). Phosphoserine occurs at positions 831, 1003, 1008, 1018, and 1034. Positions 1026–1055 (DSKKIKVDSPDDPFMTKSGATTSEKQEVTN) are disordered.

The protein belongs to the Mediator complex subunit 15 family. Component of the Mediator complex, which is composed of at least 21 subunits that form three structurally distinct submodules. The Mediator head module contains MED6, MED8, MED11, SRB4/MED17, SRB5/MED18, ROX3/MED19, SRB2/MED20 and SRB6/MED22, the middle module contains MED1, MED4, NUT1/MED5, MED7, CSE2/MED9, NUT2/MED10, SRB7/MED21 and SOH1/MED31, and the tail module contains MED2, PGD1/MED3, RGR1/MED14, GAL11/MED15 and SIN4/MED16. The head and the middle modules interact directly with RNA polymerase II, whereas the elongated tail module interacts with gene-specific regulatory proteins. GAL11/MED15 interacts with the activator GAL4; the interaction is direct. GAL11/MED15 interacts (via multiple regions) with the activator GCN4; the interaction is direct.

The protein localises to the nucleus. Component of the Mediator complex, a coactivator involved in the regulated transcription of nearly all RNA polymerase II-dependent genes. Mediator functions as a bridge to convey information from gene-specific regulatory proteins to the basal RNA polymerase II transcription machinery. The Mediator complex, having a compact conformation in its free form, is recruited to promoters by direct interactions with regulatory proteins and serves for the assembly of a functional pre-initiation complex with RNA polymerase II and the general transcription factors. The Mediator complex unfolds to an extended conformation and partially surrounds RNA polymerase II, specifically interacting with the unphosphorylated form of the C-terminal domain (CTD) of RNA polymerase II. The Mediator complex dissociates from the RNA polymerase II holoenzyme and stays at the promoter when transcriptional elongation begins. It has an important role in the negative regulation of Ty transcription. The polypeptide is Mediator of RNA polymerase II transcription subunit 15 (Saccharomyces cerevisiae (strain ATCC 204508 / S288c) (Baker's yeast)).